The sequence spans 160 residues: Eukaryotic translation initiation factor 5A (160 aa).

The segment covering 1 to 12 (MSDEEHHFESKA) has biased composition (basic and acidic residues). Positions 1–21 (MSDEEHHFESKADAGASKTFP) are disordered. Hypusine is present on K52.

The protein belongs to the eIF-5A family. Post-translationally, lys-53 undergoes hypusination, a unique post-translational modification that consists in the addition of a butylamino group from spermidine to lysine side chain, leading to the formation of the unusual amino acid hypusine. eIF-5As are the only known proteins to undergo this modification, which is essential for their function.

In terms of biological role, translation factor that promotes translation elongation and termination, particularly upon ribosome stalling at specific amino acid sequence contexts. Binds between the exit (E) and peptidyl (P) site of the ribosome and promotes rescue of stalled ribosome: specifically required for efficient translation of polyproline-containing peptides as well as other motifs that stall the ribosome. Acts as a ribosome quality control (RQC) cofactor by joining the RQC complex to facilitate peptidyl transfer during CAT tailing step. This Manihot esculenta (Cassava) protein is Eukaryotic translation initiation factor 5A.